A 195-amino-acid polypeptide reads, in one-letter code: ATP-dependent Clp protease proteolytic subunit (195 aa).

Catalysis depends on Ser-97, which acts as the Nucleophile. His-122 is a catalytic residue.

The protein belongs to the peptidase S14 family. As to quaternary structure, fourteen ClpP subunits assemble into 2 heptameric rings which stack back to back to give a disk-like structure with a central cavity, resembling the structure of eukaryotic proteasomes.

It is found in the cytoplasm. The enzyme catalyses Hydrolysis of proteins to small peptides in the presence of ATP and magnesium. alpha-casein is the usual test substrate. In the absence of ATP, only oligopeptides shorter than five residues are hydrolyzed (such as succinyl-Leu-Tyr-|-NHMec, and Leu-Tyr-Leu-|-Tyr-Trp, in which cleavage of the -Tyr-|-Leu- and -Tyr-|-Trp bonds also occurs).. Cleaves peptides in various proteins in a process that requires ATP hydrolysis. Has a chymotrypsin-like activity. Plays a major role in the degradation of misfolded proteins. The protein is ATP-dependent Clp protease proteolytic subunit of Lactobacillus acidophilus (strain ATCC 700396 / NCK56 / N2 / NCFM).